The primary structure comprises 458 residues: COBRA-like protein 2 (458 aa).

The signal sequence occupies residues 1-29 (MARFLLGAAAIALLAGVSSLLLMVPFAEA). N-linked (GlcNAc...) asparagine glycans are attached at residues Asn-38, Asn-163, Asn-171, Asn-211, Asn-236, Asn-318, Asn-333, and Asn-352. The chain crosses the membrane as a helical span at residues 430 to 450 (VFLLMSFLVCGTLAFLHNHLV).

Belongs to the COBRA family.

The protein resides in the membrane. The polypeptide is COBRA-like protein 2 (BC1L2) (Oryza sativa subsp. japonica (Rice)).